The chain runs to 152 residues: Protein-export protein SecB (152 aa).

The protein belongs to the SecB family. As to quaternary structure, homotetramer, a dimer of dimers. One homotetramer interacts with 1 SecA dimer.

It localises to the cytoplasm. One of the proteins required for the normal export of preproteins out of the cell cytoplasm. It is a molecular chaperone that binds to a subset of precursor proteins, maintaining them in a translocation-competent state. It also specifically binds to its receptor SecA. In Rickettsia africae (strain ESF-5), this protein is Protein-export protein SecB.